A 781-amino-acid polypeptide reads, in one-letter code: Aconitate hydratase, mitochondrial (781 aa).

The transit peptide at Met-1 to Cys-27 directs the protein to the mitochondrion. Residue Gln-28 is modified to Pyrrolidone carboxylic acid. Residue Lys-31 is modified to N6-succinyllysine. An N6-acetyllysine; alternate modification is found at Lys-50. Lys-50 is modified (N6-succinyllysine; alternate). Substrate is bound at residue Gln-99. N6-acetyllysine; alternate occurs at positions 138 and 144. N6-succinyllysine; alternate occurs at positions 138 and 144. Asp-192–His-194 is a binding site for substrate. Lys-233 carries the post-translational modification N6-acetyllysine; alternate. The residue at position 233 (Lys-233) is an N6-succinyllysine; alternate. Cys-385 lines the [4Fe-4S] cluster pocket. The residue at position 411 (Lys-411) is an N6-succinyllysine. The [4Fe-4S] cluster site is built by Cys-448 and Cys-451. Residues Arg-474 and Arg-479 each contribute to the substrate site. Lys-517 and Lys-523 each carry N6-acetyllysine; alternate. An N6-succinyllysine; alternate mark is found at Lys-517 and Lys-523. Positions Leu-524–Phe-537 are enriched in basic and acidic residues. The interval Leu-524–Thr-561 is disordered. Residue Lys-549 is modified to N6-succinyllysine. A compositionally biased stretch (polar residues) spans Ser-551–Thr-561. The residue at position 559 (Ser-559) is a Phosphoserine. Residue Lys-573 is modified to N6-acetyllysine; alternate. Lys-573 carries the post-translational modification N6-succinyllysine; alternate. Lys-577 and Lys-591 each carry N6-succinyllysine. Position 605 is an N6-acetyllysine; alternate (Lys-605). N6-succinyllysine; alternate is present on Lys-605. Arg-607 is a binding site for substrate. Residue Lys-628 is modified to N6-succinyllysine. Phosphoserine is present on Ser-670. Ser-670–Arg-671 lines the substrate pocket. At Lys-689 the chain carries N6-succinyllysine. 2 positions are modified to N6-acetyllysine; alternate: Lys-723 and Lys-730. N6-succinyllysine; alternate is present on residues Lys-723 and Lys-730. N6-acetyllysine occurs at positions 736, 739, and 743.

This sequence belongs to the aconitase/IPM isomerase family. As to quaternary structure, monomer. [4Fe-4S] cluster is required as a cofactor. Post-translationally, forms covalent cross-links mediated by transglutaminase TGM2, between a glutamine and the epsilon-amino group of a lysine residue, forming homopolymers and heteropolymers.

It localises to the mitochondrion. The enzyme catalyses citrate = D-threo-isocitrate. It participates in carbohydrate metabolism; tricarboxylic acid cycle; isocitrate from oxaloacetate: step 2/2. Its function is as follows. Catalyzes the isomerization of citrate to isocitrate via cis-aconitate. The sequence is that of Aconitate hydratase, mitochondrial (ACO2) from Sus scrofa (Pig).